The primary structure comprises 172 residues: MNREEKKELVSELNSLFGEASACVVTHYKGMTVAELEQLRKGMRAAGASFRVTKNRITRLALADTPFEGLADLFTGPTAIAISKDPVAPAKVCVEFAKKNEKLVILGGAMQGNVLDKQGIEALAKLPSLDELRGRLIGMITTPATRIAGVTQAPAAQLARVFNAYATKEEAA.

The protein belongs to the universal ribosomal protein uL10 family. Part of the ribosomal stalk of the 50S ribosomal subunit. The N-terminus interacts with L11 and the large rRNA to form the base of the stalk. The C-terminus forms an elongated spine to which L12 dimers bind in a sequential fashion forming a multimeric L10(L12)X complex.

Its function is as follows. Forms part of the ribosomal stalk, playing a central role in the interaction of the ribosome with GTP-bound translation factors. The polypeptide is Large ribosomal subunit protein uL10 (Rhodospirillum rubrum (strain ATCC 11170 / ATH 1.1.1 / DSM 467 / LMG 4362 / NCIMB 8255 / S1)).